The chain runs to 127 residues: Glycine cleavage system H protein (127 aa).

The region spanning 22–104 is the Lipoyl-binding domain; that stretch reads EAVIGITHFA…YTEGWMLRVK (83 aa). At Lys-63 the chain carries N6-lipoyllysine.

It belongs to the GcvH family. The glycine cleavage system is composed of four proteins: P, T, L and H. (R)-lipoate is required as a cofactor.

Functionally, the glycine cleavage system catalyzes the degradation of glycine. The H protein shuttles the methylamine group of glycine from the P protein to the T protein. The sequence is that of Glycine cleavage system H protein from Nitratidesulfovibrio vulgaris (strain DP4) (Desulfovibrio vulgaris).